Here is a 295-residue protein sequence, read N- to C-terminus: Putative aquaporin-12B (295 aa).

At 1–22 (MAGLNVSLSFFFATFTLCEAAR) the chain is on the cytoplasmic side. A helical transmembrane segment spans residues 23–41 (RASKALLPVGAYEVFAREA). Topologically, residues 42 to 55 (MRTLVELGPWAGDF) are extracellular. A helical membrane pass occupies residues 56-74 (GPDLLLTLLFLLFLAHGVT). At 75–76 (LD) the chain is on the cytoplasmic side. An intramembrane region (discontinuously helical) is located at residues 77–114 (GASANPTVSLQEFLMAEESLPGTLLKLAAQGLGMQAAC). An NPA 1 motif is present at residues 81–83 (NPT). Residues 115-120 (TLTRLC) lie on the Cytoplasmic side of the membrane. The chain crosses the membrane as a helical span at residues 121 to 142 (WAWELSDLHLLQSLMAQSCSSA). The Extracellular segment spans residues 143–145 (LRT). Residues 146-166 (SVPHGALVEAACAFCFHLTLL) traverse the membrane as a helical segment. Topologically, residues 167-174 (HLRHSPPA) are cytoplasmic. The chain crosses the membrane as a helical span at residues 175–191 (YSGPAVALLVTVTAYTA). At 192-194 (GPF) the chain is on the extracellular side. An intramembrane region (discontinuously helical) is located at residues 195–206 (TSAFFNPALAAS). An NPA 2 motif is present at residues 200-202 (NPA). Residues 207–223 (VTFACSGHTLLEYVQVY) lie on the Extracellular side of the membrane. Residues 224–244 (WLGPLTGMVLAVLLHQGRLPH) form a helical membrane-spanning segment. The Cytoplasmic portion of the chain corresponds to 245–295 (LFQRNLFYGQKNKYRAPRGKPAPASGDTQTPAKGSSVREPGRSGVEGPHSS). The segment at 257–295 (KYRAPRGKPAPASGDTQTPAKGSSVREPGRSGVEGPHSS) is disordered.

This sequence belongs to the MIP/aquaporin (TC 1.A.8) family. AQP11/AQP12 subfamily. Homotetramer; each monomer provides an independent water pore.

It is found in the membrane. It catalyses the reaction H2O(in) = H2O(out). In terms of biological role, putative aquaporin. Could form homotetrameric transmembrane channels, with each monomer independently mediating water transport across the plasma membrane along its osmotic gradient. The sequence is that of Putative aquaporin-12B from Homo sapiens (Human).